Reading from the N-terminus, the 976-residue chain is LRR receptor-like serine/threonine-protein kinase ERECTA (976 aa).

The first 24 residues, 1 to 24 (MALFRDIVLLGFLFCLSLVATVTS), serve as a signal peptide directing secretion. Residues 25 to 580 (EEGATLLEIK…RRTVRVSISR (556 aa)) are Extracellular-facing. N-linked (GlcNAc...) asparagine glycosylation is found at asparagine 65 and asparagine 74. 20 LRR repeats span residues 69-92 (NVVALNLSDLNLDGEISPAIGDLK), 93-115 (SLLSIDLRGNRLSGQIPDEIGDC), 117-140 (SLQNLDLSFNELSGDIPFSISKLK), 141-163 (QLEQLILKNNQLIGPIPSTLSQI), 165-187 (NLKILDLAQNKLSGEIPRLIYWN), 189-212 (VLQYLGLRGNNLVGNISPDLCQLT), 213-235 (GLWYFDVRNNSLTGSIPETIGNC), 237-259 (AFQVLDLSYNQLTGEIPFDIGFL), 260-282 (QVATLSLQGNQLSGKIPSVIGLM), 284-306 (ALAVLDLSGNLLSGSIPPILGNL), 308-330 (FTEKLYLHSNKLTGSIPPELGNM), 332-355 (KLHYLELNDNHLTGHIPPELGKLT), 356-379 (DLFDLNVANNDLEGPIPDHLSSCT), 380-401 (NLNSLNVHGNKFSGTIPRAFQK), 404-425 (SMTYLNLSSNNIKGPIPVELSR), 428-449 (NLDTLDLSNNKINGIIPSSLGD), 452-473 (HLLKMNLSRNHITGVVPGDFGN), 476-498 (SIMEIDLSNNDISGPIPEELNQL), 500-522 (NIILLRLENNNLTGNVGSLANCL), and 523-545 (SLTVLNVSHNNLVGDIPKNNNFS). N-linked (GlcNAc...) asparagine glycans are attached at residues asparagine 221 and asparagine 234. 2 N-linked (GlcNAc...) asparagine glycosylation sites follow: asparagine 305 and asparagine 329. Asparagine 409 carries an N-linked (GlcNAc...) asparagine glycan. The N-linked (GlcNAc...) asparagine glycan is linked to asparagine 457. N-linked (GlcNAc...) asparagine glycans are attached at residues asparagine 510, asparagine 528, and asparagine 543. The helical transmembrane segment at 581-601 (AAILGIAIGGLVILLMVLIAA) threads the bilayer. Residues 602-976 (CRPHNPPPFL…FGQVISQNSE (375 aa)) lie on the Cytoplasmic side of the membrane. Threonine 645 carries the phosphothreonine modification. Residues 648–918 (LSEKYIIGHG…QVTRVLGSFM (271 aa)) form the Protein kinase domain. Residues 654–662 (IGHGASSTV) and lysine 676 contribute to the ATP site. Residues tyrosine 721 and tyrosine 760 each carry the phosphotyrosine modification. Residue aspartate 773 is the Proton acceptor of the active site. At tyrosine 815 the chain carries Phosphotyrosine. Threonine 823 is subject to Phosphothreonine.

This sequence belongs to the protein kinase superfamily. Ser/Thr protein kinase family. As to quaternary structure, homodimer and heterodimer with ERL1 and TMM. Interacts with EPF1, EPF2, EPFL4, EPFL5 and EPFL6. Interacts with SERK1, SERK2, SERK3/BAK1 and SERK4 in a EPF2-induced manner. Interacts with EPFL9/STOMAGEN. In terms of tissue distribution, mostly expressed in shoot apical meristems (SAM), organ primordia, flowers, siliques and young rosette leaves, and, to a lower extent, in stems and cauline leaves. Expressed in growing inflorescence stems and pedicels. Detected in epidermis, phloem and xylem.

The protein localises to the cell membrane. It catalyses the reaction L-seryl-[protein] + ATP = O-phospho-L-seryl-[protein] + ADP + H(+). It carries out the reaction L-threonyl-[protein] + ATP = O-phospho-L-threonyl-[protein] + ADP + H(+). Its function is as follows. Receptor kinase that, together with ERL1 and ERL2, regulates aerial architecture, including inflorescence (e.g. shoot apical meristem-originating organ shape, elongation of the internode and pedicels, and adaxial-abaxial polarity), and stomatal patterning (e.g. density and clustering), probably by tuning cell division and expansion. Redundantly involved with ERL1 in procambial development regulation. Forms a functional ligand-receptor pair with EPF2 (AC Q8LC53). Modulates plant transpiration efficiency by controlling stomatal density, leaf photosynthetic capacity, epidermal cell expansion, mesophyll cell proliferation and cell-cell contact. A phloem-specific expression of ER is sufficient for proper inflorescence architecture. Probable major trait regulating canalization (maintenance of phenotype despite varying environment) in many aspect of the plant physiology (e.g. plant morphology, light-dependent leaves number, branch number, flowering time, phytate and mineral concentrations) by transducing microenvironmental variation into phenotypic differentiation (ecological amplifier). May maintain development integrity in heat stress conditions. Regulates cell wall composition and structure. Confers resistance to the pathogenic bacteria Ralstonia solanacearum and to the necrotrophic fungi Plectosphaerella cucumerina and Pythium irregulare, and required for callose deposition upon infection. Resistance to P.cucumerina seems cell wall-mediated. Forms a constitutive complex with TMM involved in the recognition of the stomatal regulatory peptides EPF1, EPF2 and EPFL9/STOMAGEN. This Arabidopsis thaliana (Mouse-ear cress) protein is LRR receptor-like serine/threonine-protein kinase ERECTA.